A 290-amino-acid chain; its full sequence is Probable adenylate kinase 2, chloroplastic (290 aa).

The span at 1-10 shows a compositional bias: low complexity; sequence MASSMAATAT. Positions 1-37 are disordered; sequence MASSMAATATLSPPVLSAERPTVRGGLFLPPSPATSR. The transit peptide at 1-61 directs the protein to the chloroplast; that stretch reads MASSMAATAT…ATRKPRSLPR (61 aa). 83 to 88 provides a ligand contact to ATP; sequence ASGKGT. An NMP region spans residues 103–132; that stretch reads SAGDLLRAEIAAGSENGKRAKEFMEKGQLV. AMP is bound by residues R109, 130–132, 159–162, and Q166; these read QLV and GYPR. Residues R193, R197, and 206 to 207 each bind ATP; that span reads IY. The segment at 196 to 229 is LID; sequence GRRLDPVTGKIYHLKYSPPENEEIASRLTQRFDD. Positions 226 and 237 each coordinate AMP.

This sequence belongs to the adenylate kinase family.

It localises to the plastid. The protein resides in the chloroplast. It carries out the reaction AMP + ATP = 2 ADP. Functionally, catalyzes the reversible transfer of the terminal phosphate group between ATP and AMP. Plays an important role in cellular energy homeostasis and in adenine nucleotide metabolism. This Oryza sativa subsp. japonica (Rice) protein is Probable adenylate kinase 2, chloroplastic.